Reading from the N-terminus, the 244-residue chain is MKIDVLTLFPDMFTGVFGSSILKQASDKGIVSFQTVDFREYAANKHRKVDDYPYGGGAGMVLSPQPIFDAVSALTKNGKKKPRIIMLCPQGEQHSQQKAAELAKEEHLIFLCGHYEGFDERVRHLVTDELSIGDYVLTGGELAAMVIADSVVRLLPGVLGNDESAVTDSYSTGLLEHPHYTRPADFRGMKVPDVLLSGHHAKIEEWRMEQSLRRTLERRPDLLKGYEPTAKEADILKRLMDKQE.

Residues Gly-113 and 132–137 (IGDYVL) contribute to the S-adenosyl-L-methionine site.

This sequence belongs to the RNA methyltransferase TrmD family. Homodimer.

It is found in the cytoplasm. It carries out the reaction guanosine(37) in tRNA + S-adenosyl-L-methionine = N(1)-methylguanosine(37) in tRNA + S-adenosyl-L-homocysteine + H(+). Its function is as follows. Specifically methylates guanosine-37 in various tRNAs. This chain is tRNA (guanine-N(1)-)-methyltransferase, found in Shouchella clausii (strain KSM-K16) (Alkalihalobacillus clausii).